The sequence spans 62 residues: MTLAFQLAVFALIATSLILLISVPVVFASPDGWSSNKNVVFSGTSLWIGLVFLVGILNSLIS.

Helical transmembrane passes span alanine 8–alanine 28 and phenylalanine 41–isoleucine 61.

Belongs to the PsbZ family. As to quaternary structure, PSII is composed of 1 copy each of membrane proteins PsbA, PsbB, PsbC, PsbD, PsbE, PsbF, PsbH, PsbI, PsbJ, PsbK, PsbL, PsbM, PsbT, PsbY, PsbZ, Psb30/Ycf12, at least 3 peripheral proteins of the oxygen-evolving complex and a large number of cofactors. It forms dimeric complexes.

Its subcellular location is the plastid. It is found in the chloroplast thylakoid membrane. Its function is as follows. May control the interaction of photosystem II (PSII) cores with the light-harvesting antenna, regulates electron flow through the 2 photosystem reaction centers. PSII is a light-driven water plastoquinone oxidoreductase, using light energy to abstract electrons from H(2)O, generating a proton gradient subsequently used for ATP formation. The polypeptide is Photosystem II reaction center protein Z (Nicotiana sylvestris (Wood tobacco)).